Consider the following 150-residue polypeptide: Transthyretin (150 aa).

A signal peptide spans 1–20 (MAFHSMLLVFLAGLVFLTEA). Residue Cys33 is modified to Sulfocysteine. Lys38, Glu77, and Ser140 together coordinate L-thyroxine.

The protein belongs to the transthyretin family. Homotetramer. Dimer of dimers. In the homotetramer, subunits assemble around a central channel that can accommodate two ligand molecules. Interacts with RBP4. Post-translationally, sulfonation of the reactive cysteine Cys-33 enhances the stability of the native conformation of TTR, avoiding misassembly of the protein leading to amyloid formation. As to expression, strongly expressed in the brain, and to a lesser extent in the eye.

Its subcellular location is the secreted. In terms of biological role, thyroid hormone-binding protein, with a much higher binding affinity for triiodothyronine (T3) than for thyroxine (T4). Probably transports triiodothyronine from the bloodstream to the brain. This Crocodylus porosus (Saltwater crocodile) protein is Transthyretin (TTR).